Here is a 199-residue protein sequence, read N- to C-terminus: N-(5'-phosphoribosyl)anthranilate isomerase (199 aa).

Belongs to the TrpF family.

It carries out the reaction N-(5-phospho-beta-D-ribosyl)anthranilate = 1-(2-carboxyphenylamino)-1-deoxy-D-ribulose 5-phosphate. It functions in the pathway amino-acid biosynthesis; L-tryptophan biosynthesis; L-tryptophan from chorismate: step 3/5. The protein is N-(5'-phosphoribosyl)anthranilate isomerase of Streptococcus pneumoniae (strain ATCC BAA-255 / R6).